Reading from the N-terminus, the 61-residue chain is UPF0181 protein KPN78578_22920 (61 aa).

This sequence belongs to the UPF0181 family.

In Klebsiella pneumoniae subsp. pneumoniae (strain ATCC 700721 / MGH 78578), this protein is UPF0181 protein KPN78578_22920.